Reading from the N-terminus, the 212-residue chain is tRNA (guanine-N(7)-)-methyltransferase (212 aa).

S-adenosyl-L-methionine-binding residues include E44, D69, D96, and D118. D118 is an active-site residue. Position 122 (K122) interacts with substrate. The tract at residues R124–R129 is interaction with RNA. Residues D154 and T191–E194 contribute to the substrate site.

It belongs to the class I-like SAM-binding methyltransferase superfamily. TrmB family.

The enzyme catalyses guanosine(46) in tRNA + S-adenosyl-L-methionine = N(7)-methylguanosine(46) in tRNA + S-adenosyl-L-homocysteine. It participates in tRNA modification; N(7)-methylguanine-tRNA biosynthesis. Its function is as follows. Catalyzes the formation of N(7)-methylguanine at position 46 (m7G46) in tRNA. This Streptococcus gordonii (strain Challis / ATCC 35105 / BCRC 15272 / CH1 / DL1 / V288) protein is tRNA (guanine-N(7)-)-methyltransferase.